A 91-amino-acid chain; its full sequence is MVVGEGLLSAARFALRVVACGNALSLALKSNLGRSFSSFPAWAEYLITDSFESSGTFESDGGGGRITQRCALRPSGRCLRQRSLAGARVEP.

The polypeptide is Protein YchS (ychS) (Escherichia coli O157:H7).